The chain runs to 463 residues: MIKSILSLQNFKFIKPCTNSSILKYNNNNNTNNNNNNNGINKYNSTFNNNNSNFSNKNLFSSKQYQQQSICNIPILSTISYHNKNNTNINTIINNNNSSNNNLINLNDKFNNLNNKTSPIIFNKNYSTTVSTLLDDNNSNSNNNNNSNNNKPSTTFVNDWISKFPNSVQPYLRLSRVDKPIGVWLLLYPCCWSISLAAPAGSFPDLKTMLVFGIGAYVMRSAGCVINDMADYKFDSKVERTKTRPIASKQLTHKQSLIFLGGQLLASFGLILSSLNYYTIALCASSLPIVVLYPFMKRFTYYPQFVLGLAFNWGALAGYSAIAGSCNWSIVAPLYLAGISWTMVYDTIYAHQDKRDDILVGVKSTALKFAEKSRIILSVFSGLVISGMFLTGIAANMPLFYYLGTAACSSHLIWQLKTVDFNNPSSCLEKFISNKNFGLYFLLIIIVSKLLQDKENENEIQKK.

Disordered stretches follow at residues 28-48 and 133-152; these read NNNTNNNNNNNGINKYNSTFN and LLDDNNSNSNNNNNSNNNKP. The span at 137 to 150 shows a compositional bias: low complexity; sequence NNSNSNNNNNSNNN. A run of 7 helical transmembrane segments spans residues 181–201, 206–226, 257–277, 305–325, 330–350, 375–395, and 431–451; these read IGVWLLLYPCCWSISLAAPAG, LKTMLVFGIGAYVMRSAGCVI, LIFLGGQLLASFGLILSSLNY, FVLGLAFNWGALAGYSAIAGS, IVAPLYLAGISWTMVYDTIYA, IILSVFSGLVISGMFLTGIAA, and FISNKNFGLYFLLIIIVSKLL.

This sequence belongs to the UbiA prenyltransferase family. Mg(2+) is required as a cofactor.

The protein resides in the mitochondrion inner membrane. The catalysed reaction is an all-trans-polyprenyl diphosphate + 4-hydroxybenzoate = a 4-hydroxy-3-(all-trans-polyprenyl)benzoate + diphosphate. It participates in cofactor biosynthesis; ubiquinone biosynthesis. In terms of biological role, catalyzes the prenylation of para-hydroxybenzoate (PHB) with an all-trans polyprenyl group. Mediates the second step in the final reaction sequence of coenzyme Q (CoQ) biosynthesis, which is the condensation of the polyisoprenoid side chain with PHB. Functionally, catalyzes the prenylation of para-hydroxybenzoate (PHB) with an all-trans polyprenyl group. Mediates the second step in the final reaction sequence of coenzyme Q (CoQ) biosynthesis, which is the condensation of the polyisoprenoid side chain with PHB, generating the first membrane-bound Q intermediate. The sequence is that of 4-hydroxybenzoate polyprenyltransferase, mitochondrial from Dictyostelium discoideum (Social amoeba).